The sequence spans 33 residues: Nigrocin-1 (33 aa).

Residues Cys-27 and Cys-33 are joined by a disulfide bond.

This sequence belongs to the frog skin active peptide (FSAP) family. Brevinin subfamily. In terms of tissue distribution, expressed by the skin dorsal glands.

It localises to the secreted. In terms of biological role, shows antibacterial activity against both Gram-positive and Gram-negative bacteria and against the fungus C.albicans. Has no hemolytic activity. The polypeptide is Nigrocin-1 (Pelophylax nigromaculatus (Black-spotted frog)).